The primary structure comprises 301 residues: Protoheme IX farnesyltransferase (301 aa).

The next 9 membrane-spanning stretches (helical) occupy residues 20 to 42 (FTEL…GMWL), 55 to 75 (VDVI…SGAF), 105 to 125 (ALMV…MTTW), 126 to 146 (QAGV…SLYA), 150 to 172 (LVSN…WFAV), 176 to 198 (FSIV…FYAI), 227 to 247 (MFFW…LGIV), 249 to 269 (VILA…GFKM), and 280 to 300 (FVYS…ISIF).

This sequence belongs to the UbiA prenyltransferase family. Protoheme IX farnesyltransferase subfamily. Interacts with CtaA.

The protein resides in the cell membrane. It catalyses the reaction heme b + (2E,6E)-farnesyl diphosphate + H2O = Fe(II)-heme o + diphosphate. Its pathway is porphyrin-containing compound metabolism; heme O biosynthesis; heme O from protoheme: step 1/1. In terms of biological role, converts heme B (protoheme IX) to heme O by substitution of the vinyl group on carbon 2 of heme B porphyrin ring with a hydroxyethyl farnesyl side group. The protein is Protoheme IX farnesyltransferase of Listeria monocytogenes serovar 1/2a (strain ATCC BAA-679 / EGD-e).